Consider the following 275-residue polypeptide: Phosphate import ATP-binding protein PstB (275 aa).

The ABC transporter domain occupies 28–270 (IDCRDIRVFY…PREKRTEDYI (243 aa)). 60–67 (GPSGCGKS) lines the ATP pocket.

Belongs to the ABC transporter superfamily. Phosphate importer (TC 3.A.1.7) family. The complex is composed of two ATP-binding proteins (PstB), two transmembrane proteins (PstC and PstA) and a solute-binding protein (PstS).

It localises to the cell inner membrane. It carries out the reaction phosphate(out) + ATP + H2O = ADP + 2 phosphate(in) + H(+). Functionally, part of the ABC transporter complex PstSACB involved in phosphate import. Responsible for energy coupling to the transport system. The chain is Phosphate import ATP-binding protein PstB from Hyphomonas neptunium (strain ATCC 15444).